The chain runs to 359 residues: Glycerol-1-phosphate dehydrogenase [NAD(P)+] (359 aa).

NAD(+)-binding positions include G107–D111 and T129–S132. D134 contacts substrate. S138 is a binding site for NAD(+). D181 is a substrate binding site. Zn(2+)-binding residues include D181 and H261. H265 contributes to the substrate binding site. Residue H277 participates in Zn(2+) binding.

Belongs to the glycerol-1-phosphate dehydrogenase family. The cofactor is Zn(2+).

Its subcellular location is the cytoplasm. It catalyses the reaction sn-glycerol 1-phosphate + NAD(+) = dihydroxyacetone phosphate + NADH + H(+). The catalysed reaction is sn-glycerol 1-phosphate + NADP(+) = dihydroxyacetone phosphate + NADPH + H(+). Its pathway is membrane lipid metabolism; glycerophospholipid metabolism. Catalyzes the NAD(P)H-dependent reduction of dihydroxyacetonephosphate (DHAP or glycerone phosphate) to glycerol 1-phosphate (G1P). The G1P thus generated is used as the glycerophosphate backbone of phospholipids in the cellular membranes of Archaea. The protein is Glycerol-1-phosphate dehydrogenase [NAD(P)+] of Methanospirillum hungatei JF-1 (strain ATCC 27890 / DSM 864 / NBRC 100397 / JF-1).